The primary structure comprises 330 residues: Probable deoxyhypusine synthase (330 aa).

The active-site Nucleophile is Lys303.

Belongs to the deoxyhypusine synthase family. NAD(+) is required as a cofactor.

The catalysed reaction is [eIF5A protein]-L-lysine + spermidine = [eIF5A protein]-deoxyhypusine + propane-1,3-diamine. It participates in protein modification; eIF5A hypusination. Functionally, catalyzes the NAD-dependent oxidative cleavage of spermidine and the subsequent transfer of the butylamine moiety of spermidine to the epsilon-amino group of a specific lysine residue of the eIF-5A precursor protein to form the intermediate deoxyhypusine residue. The sequence is that of Probable deoxyhypusine synthase (dys) from Methanocaldococcus jannaschii (strain ATCC 43067 / DSM 2661 / JAL-1 / JCM 10045 / NBRC 100440) (Methanococcus jannaschii).